The following is a 180-amino-acid chain: Cytokinin-beta-glucosidase 1 (180 aa).

Functionally, hydrolyzes cytokinin glucosides thus liberating free cytokinins. The protein is Cytokinin-beta-glucosidase 1 (ROLC1) of Linaria vulgaris (Toadflax).